Reading from the N-terminus, the 283-residue chain is Glutamate racemase (283 aa).

Substrate is bound by residues 28 to 29 (DS) and 60 to 61 (YG). The active-site Proton donor/acceptor is Cys-92. 93–94 (NT) provides a ligand contact to substrate. Residue Cys-204 is the Proton donor/acceptor of the active site. 205–206 (TH) contributes to the substrate binding site.

It belongs to the aspartate/glutamate racemases family.

The enzyme catalyses L-glutamate = D-glutamate. It functions in the pathway cell wall biogenesis; peptidoglycan biosynthesis. Provides the (R)-glutamate required for cell wall biosynthesis. This is Glutamate racemase from Salmonella enteritidis PT4 (strain P125109).